The sequence spans 165 residues: Nucleotide-binding protein Ccon26_01810 (165 aa).

The protein belongs to the YajQ family.

Nucleotide-binding protein. This is Nucleotide-binding protein Ccon26_01810 from Campylobacter concisus (strain 13826).